We begin with the raw amino-acid sequence, 1413 residues long: DNA-directed RNA polymerase subunit beta' (1413 aa).

Positions 70, 72, 85, and 88 each coordinate Zn(2+). Residues Asp460, Asp462, and Asp464 each coordinate Mg(2+). The Zn(2+) site is built by Cys819, Cys893, Cys900, and Cys903.

It belongs to the RNA polymerase beta' chain family. The RNAP catalytic core consists of 2 alpha, 1 beta, 1 beta' and 1 omega subunit. When a sigma factor is associated with the core the holoenzyme is formed, which can initiate transcription. It depends on Mg(2+) as a cofactor. The cofactor is Zn(2+).

The catalysed reaction is RNA(n) + a ribonucleoside 5'-triphosphate = RNA(n+1) + diphosphate. Its function is as follows. DNA-dependent RNA polymerase catalyzes the transcription of DNA into RNA using the four ribonucleoside triphosphates as substrates. This Burkholderia vietnamiensis (strain G4 / LMG 22486) (Burkholderia cepacia (strain R1808)) protein is DNA-directed RNA polymerase subunit beta'.